Here is a 713-residue protein sequence, read N- to C-terminus: Forkhead box protein P2 (713 aa).

Polar residues predominate over residues 1–28; the sequence is MMQESATETISNSSMNQNGMSTLSSQLD. Disordered stretches follow at residues 1-45 and 279-337; these read MMQE…SEVS and DNGI…TGAS. Residues 290 to 303 are compositionally biased toward low complexity; that stretch reads TTNNSSSTTSSTTS. Residues 313-322 show a composition bias toward polar residues; the sequence is SIVNGQSSVL. The span at 324 to 335 shows a compositional bias: basic and acidic residues; the sequence is ARRDSSSHEETG. Residues 344–369 form a C2H2-type zinc finger; that stretch reads GVCKWPGCESICEDFGQFLKHLNNEH. Residues 386 to 407 form a leucine-zipper region; the sequence is VQQLEIQLSKERERLQAMMTHL. Residues 420–424 are CTBP1-binding; sequence PLNLV. Low complexity predominate over residues 436–457; sequence TSPQSLPQTPTTPTAPVTPITQ. The interval 436–463 is disordered; it reads TSPQSLPQTPTTPTAPVTPITQGPSVIT. The segment at residues 502-592 is a DNA-binding region (fork-head); it reads RPPFTYATLI…SQKITGSPTL (91 aa). Disordered regions lie at residues 647–666 and 676–713; these read LDHI…QPHI and VIAE…EDLE. The span at 697–713 shows a compositional bias: acidic residues; it reads LEDDREIEEEPLSEDLE.

As to quaternary structure, forms homodimers and heterodimers with FOXP1 and FOXP4. Dimerization is required for DNA-binding. Interacts with CTBP1. Interacts with FOXP1. Interacts with TBR1. Interacts with ZMYM2.

It localises to the nucleus. Functionally, transcriptional repressor that may play a role in the specification and differentiation of lung epithelium. May also play a role in developing neural, gastrointestinal and cardiovascular tissues. Can act with CTBP1 to synergistically repress transcription but CTPBP1 is not essential. Plays a role in synapse formation by regulating SRPX2 levels. The polypeptide is Forkhead box protein P2 (FOXP2) (Hylobates lar (Lar gibbon)).